Consider the following 476-residue polypeptide: Bifunctional protein HldE (476 aa).

Positions methionine 1–glycine 319 are ribokinase. ATP is bound at residue asparagine 195–glutamate 198. Residue aspartate 264 is part of the active site. The segment at methionine 344–aspartate 476 is cytidylyltransferase.

The protein in the N-terminal section; belongs to the carbohydrate kinase PfkB family. This sequence in the C-terminal section; belongs to the cytidylyltransferase family. In terms of assembly, homodimer.

It catalyses the reaction D-glycero-beta-D-manno-heptose 7-phosphate + ATP = D-glycero-beta-D-manno-heptose 1,7-bisphosphate + ADP + H(+). The enzyme catalyses D-glycero-beta-D-manno-heptose 1-phosphate + ATP + H(+) = ADP-D-glycero-beta-D-manno-heptose + diphosphate. Its pathway is nucleotide-sugar biosynthesis; ADP-L-glycero-beta-D-manno-heptose biosynthesis; ADP-L-glycero-beta-D-manno-heptose from D-glycero-beta-D-manno-heptose 7-phosphate: step 1/4. It participates in nucleotide-sugar biosynthesis; ADP-L-glycero-beta-D-manno-heptose biosynthesis; ADP-L-glycero-beta-D-manno-heptose from D-glycero-beta-D-manno-heptose 7-phosphate: step 3/4. Catalyzes the phosphorylation of D-glycero-D-manno-heptose 7-phosphate at the C-1 position to selectively form D-glycero-beta-D-manno-heptose-1,7-bisphosphate. Its function is as follows. Catalyzes the ADP transfer from ATP to D-glycero-beta-D-manno-heptose 1-phosphate, yielding ADP-D-glycero-beta-D-manno-heptose. This chain is Bifunctional protein HldE, found in Actinobacillus succinogenes (strain ATCC 55618 / DSM 22257 / CCUG 43843 / 130Z).